We begin with the raw amino-acid sequence, 310 residues long: Inner membrane protein YfdC (310 aa).

Residues 1-12 are compositionally biased toward basic and acidic residues; that stretch reads MDNDKIDQHSDE. Positions 1-27 are disordered; the sequence is MDNDKIDQHSDEIEVESEEKERGKKIE. Residues 1–58 lie on the Cytoplasmic side of the membrane; the sequence is MDNDKIDQHSDEIEVESEEKERGKKIEIDEDRLPSRAMAIHEHIRQDGEKELERDAMA. A helical membrane pass occupies residues 59 to 81; the sequence is LLWSAIAAGLSMGASLLAKGIFQ. Over 82 to 90 the chain is Periplasmic; it reads VELEGVPGS. The chain crosses the membrane as a helical span at residues 91–113; it reads FLLENLGYTFGFIIVIMARQQLF. Over 114–133 the chain is Cytoplasmic; sequence TENTVTAVLPVMQKPTMSNV. The chain crosses the membrane as a helical span at residues 134 to 156; it reads GLLIRLWGVVLLGNILGTGIAAW. At 157-186 the chain is on the periplasmic side; sequence AFEYMPIFNEETRDAFVKIGMDVMKNTPSE. A helical transmembrane segment spans residues 187–206; that stretch reads MFANAIISGWLIATMVWMFP. The Cytoplasmic segment spans residues 207 to 212; it reads AAGAAK. Residues 213 to 232 traverse the membrane as a helical segment; the sequence is IVVIILMTWLIALGDTTHIV. At 233-251 the chain is on the periplasmic side; it reads VGSVEILYLVFNGTLHWSD. The helical transmembrane segment at 252–274 threads the bilayer; the sequence is FIWPFALPTLAGNICGGTFIFAL. The Cytoplasmic portion of the chain corresponds to 275–310; it reads MSHAQIRNDMSNKRKAEARQKAERAENIKKNYKNPA. The span at 291 to 303 shows a compositional bias: basic and acidic residues; sequence EARQKAERAENIK. The tract at residues 291–310 is disordered; sequence EARQKAERAENIKKNYKNPA.

The protein localises to the cell inner membrane. The sequence is that of Inner membrane protein YfdC (yfdC) from Escherichia coli (strain K12).